The following is an 88-amino-acid chain: Class II hydrophobin 5 (88 aa).

Residues Met-1–Ala-14 form the signal peptide. Intrachain disulfides connect Cys-27/Cys-73, Cys-35/Cys-64, Cys-36/Cys-48, and Cys-74/Cys-85.

The protein belongs to the cerato-ulmin hydrophobin family. Homotetramer. Further self-assembles to form highly ordered films at water-air interfaces through intermolecular interactions. In terms of tissue distribution, only appears on young aerial hyphae. HCf-5 is the most abundant transcript in sporulating mycelium.

Its subcellular location is the secreted. The protein localises to the cell wall. Its function is as follows. Aerial growth, conidiation, and dispersal of filamentous fungi in the environment rely upon a capability of their secreting small amphipathic proteins called hydrophobins (HPBs) with low sequence identity. Class I can self-assemble into an outermost layer of rodlet bundles on aerial cell surfaces, conferring cellular hydrophobicity that supports fungal growth, development and dispersal; whereas Class II form highly ordered films at water-air interfaces through intermolecular interactions but contribute nothing to the rodlet structure. The sequence is that of Class II hydrophobin 5 from Passalora fulva (Tomato leaf mold).